The chain runs to 161 residues: Allophycocyanin subunit alpha-B (161 aa).

Asn71 is modified (N4-methylasparagine). Cys81 provides a ligand contact to (2R,3E)-phycocyanobilin.

This sequence belongs to the phycobiliprotein family. Heterohexamer of two alpha chains, one alpha-B chain and three beta chains. Contains one covalently linked phycocyanobilin chromophore. The chromophore is added by phycocyanobilin lyase CpcS 1.

It is found in the cellular thylakoid membrane. Its function is as follows. Light-harvesting photosynthetic bile pigment-protein from the phycobiliprotein complex. Allophycocyanin has a maximum absorption at approximately 654 nanometers. The polypeptide is Allophycocyanin subunit alpha-B (apcD) (Nostoc sp. (strain PCC 7120 / SAG 25.82 / UTEX 2576)).